The following is a 189-amino-acid chain: Methylated-DNA--protein-cysteine methyltransferase (189 aa).

DNA contacts are provided by tyrosine 128 and arginine 142. Catalysis depends on cysteine 159, which acts as the Nucleophile; methyl group acceptor. Serine 165 contributes to the DNA binding site.

This sequence belongs to the MGMT family.

The protein localises to the nucleus. The enzyme catalyses a 6-O-methyl-2'-deoxyguanosine in DNA + L-cysteinyl-[protein] = S-methyl-L-cysteinyl-[protein] + a 2'-deoxyguanosine in DNA. It catalyses the reaction a 4-O-methyl-thymidine in DNA + L-cysteinyl-[protein] = a thymidine in DNA + S-methyl-L-cysteinyl-[protein]. Involved in the cellular defense against the biological effects of O6-methylguanine (O6-MeG) and O4-methylthymine (O4-MeT) in DNA. Repairs the methylated nucleobase in DNA by stoichiometrically transferring the methyl group to a cysteine residue in the enzyme. This is a suicide reaction: the enzyme is irreversibly inactivated. The polypeptide is Methylated-DNA--protein-cysteine methyltransferase (MGT1) (Kluyveromyces lactis (strain ATCC 8585 / CBS 2359 / DSM 70799 / NBRC 1267 / NRRL Y-1140 / WM37) (Yeast)).